We begin with the raw amino-acid sequence, 70 residues long: MQFIAASIAAGIAAFGASIGNGMVISKTLEGMARQPEMAGTLRGTMFIGVGLIEAVPILSVVVAFMLMSR.

2 consecutive transmembrane segments (helical) span residues 3 to 23 and 47 to 67; these read FIAASIAAGIAAFGASIGNGM and FIGVGLIEAVPILSVVVAFML.

The protein belongs to the ATPase C chain family. As to quaternary structure, F-type ATPases have 2 components, F(1) - the catalytic core - and F(0) - the membrane proton channel. F(1) has five subunits: alpha(3), beta(3), gamma(1), delta(1), epsilon(1). F(0) has three main subunits: a(1), b(2) and c(10-14). The alpha and beta chains form an alternating ring which encloses part of the gamma chain. F(1) is attached to F(0) by a central stalk formed by the gamma and epsilon chains, while a peripheral stalk is formed by the delta and b chains.

It localises to the cell membrane. In terms of biological role, f(1)F(0) ATP synthase produces ATP from ADP in the presence of a proton or sodium gradient. F-type ATPases consist of two structural domains, F(1) containing the extramembraneous catalytic core and F(0) containing the membrane proton channel, linked together by a central stalk and a peripheral stalk. During catalysis, ATP synthesis in the catalytic domain of F(1) is coupled via a rotary mechanism of the central stalk subunits to proton translocation. Functionally, key component of the F(0) channel; it plays a direct role in translocation across the membrane. A homomeric c-ring of between 10-14 subunits forms the central stalk rotor element with the F(1) delta and epsilon subunits. This chain is ATP synthase subunit c, found in Lacticaseibacillus casei (strain BL23) (Lactobacillus casei).